The primary structure comprises 445 residues: von Willebrand factor A domain-containing protein 1 (445 aa).

The signal sequence occupies residues 1 to 22 (MLPWTALGLALSLRLALARSGA). Residues 34-213 (DLMFLLDSSA…ELRGSILDAM (180 aa)) form the VWFA domain. Phosphoserine; by FAM20C is present on residues S74 and S80. Y83 bears the Phosphotyrosine mark. The residue at position 93 (S93) is a Phosphoserine; by FAM20C. Positions 214–304 (RPQQLHATEI…QILRVRTRPG (91 aa)) constitute a Fibronectin type-III 1 domain. N-linked (GlcNAc...) asparagine glycosylation occurs at N264. 2 disordered regions span residues 302-325 (RPGEAGPGASGPESGAGPAPTQLA) and 411-445 (RESALSAKACTPDGPRPRPRPVPRAPTPGTASREP). The segment covering 311-325 (SGPESGAGPAPTQLA) has biased composition (low complexity). The Fibronectin type-III 2 domain maps to 334–427 (GPERIVISHA…KACTPDGPRP (94 aa)).

Homodimer or homomultimer; disulfide-linked. Interacts with HSPG2. N-glycosylated.

It is found in the secreted. The protein localises to the extracellular space. The protein resides in the extracellular matrix. Its subcellular location is the basement membrane. Promotes matrix assembly. Involved in the organization of skeletal muscles and in the formation of neuromuscular junctions. The polypeptide is von Willebrand factor A domain-containing protein 1 (Homo sapiens (Human)).